The primary structure comprises 705 residues: MLSTLARAATRRPLTVMLLWGLFLLLGFGLGTGVFGRLSDDVPDVPGTESQVAAEHLDGLDPAGDSITGVVEAAAVADPAVRAEVRRAVADLREVAGVAEVPDPYATPGTVAEDGRALVVSVTLEGGLDDDAEEAAVDDAADRLHGIDGSAVSGVHVSGGPLLGQQLGERAQEDVKNAELISLPVVLVLLLVVFGGLRAAGLPLLVAVAGIAGAFLALFGFSHVTDISVYAIQVTTMLGLGLAVDYALLMLVRFREERRHIPDVVEAVHRTVAAAGRTVLFSGLTVAVSLAGLLVFPSTFLRSMGLAVAAVVVVDMLAALTLLPALLTRFGGRIPPAKARPEEEGRLFARLARFAARRRVAVLAVAVPALLVVALPVTGMSINLGDARQLPKSTEARQLYDAIEAHFPPGTGVSPVTVVLRPGTDTATADRIGAIAGGTTVRDLPGGTTVLELPAGGAADGPAATELVERVRDLRGDAPVQVTGSAAQLVDFRQMLADRAPWAALTVLTGIFVLLFAFTGSVLLPLRTVATTLLSLGAALGAVVWVFQDGHLAGPIGAEGLGALSLTAPPLIIAIAFGLAMDYELFILARMREARERTGDDREAVVTGLRRSGRVVTCAALLLAVVFGAFMTGGFSPILQIGLGLTLAVLIDATVVRMLLVPATMALLGRHAWWAPKPLRRAHERFGVREEAPGPAPAPPQPAAR.

The next 13 helical transmembrane spans lie at 16-36 (VMLLWGLFLLLGFGLGTGVFG), 144-164 (LHGIDGSAVSGVHVSGGPLLG), 177-197 (NAELISLPVVLVLLLVVFGGL), 201-221 (GLPLLVAVAGIAGAFLALFGF), 232-252 (IQVTTMLGLGLAVDYALLMLV), 280-300 (LFSGLTVAVSLAGLLVFPSTF), 306-326 (LAVAAVVVVDMLAALTLLPAL), 360-380 (VAVLAVAVPALLVVALPVTGM), 504-524 (ALTVLTGIFVLLFAFTGSVLL), 528-548 (TVATTLLSLGAALGAVVWVFQ), 561-581 (LGALSLTAPPLIIAIAFGLAM), 615-635 (VVTCAALLLAVVFGAFMTGGF), and 636-656 (SPILQIGLGLTLAVLIDATVV).

Belongs to the resistance-nodulation-cell division (RND) (TC 2.A.6) family. MmpL subfamily.

The protein localises to the cell membrane. In Streptomyces coelicolor (strain ATCC BAA-471 / A3(2) / M145), this protein is Putative membrane protein SCO6666.